Consider the following 259-residue polypeptide: MQFNNKPLIGVVHLPPLPGSPGYKGELDEVIDRAISDAAKYQEAGFDAIILENYGDFPYSKTVGKETVSAFSVVANEVKREIALPLGINVLRNDCIAAYSIAYSIKADFIRVNVLTGVAFTDQGIVEGCARELAELRTRLPSRIDVLADVHVKHATHFSNFENALLDTIERGGADAVIVTGSRTGSEVDIQELITAKRISPVPVLVGSGVNPRNIKLFWRYSDGFIVGTWVKEGGRTINEVSIERATKLAKLVKSLREG.

Belongs to the BtpA family.

This is an uncharacterized protein from Pyrococcus horikoshii (strain ATCC 700860 / DSM 12428 / JCM 9974 / NBRC 100139 / OT-3).